We begin with the raw amino-acid sequence, 31 residues long: LysM-domain containing protein (31 aa).

The LysM 1 repeat unit spans residues 1 to 28 (YSPSLTDLQSYNAMNGPALKAGDILAVP).

The protein is LysM-domain containing protein of Jatropha curcas (Barbados nut).